A 217-amino-acid chain; its full sequence is Adenylate kinase (217 aa).

Gly-10–Thr-15 lines the ATP pocket. Positions Ser-30–Val-59 are NMP. AMP-binding positions include Thr-31, Arg-36, Glu-57–Val-59, Gly-85–Arg-88, and Gln-92. Positions Gly-126–Asp-163 are LID. ATP is bound at residue Arg-127. Cys-130 and Cys-133 together coordinate Zn(2+). Thr-136–Tyr-137 lines the ATP pocket. Zn(2+) contacts are provided by Cys-150 and Cys-153. Residues Arg-160 and Arg-171 each contribute to the AMP site. Lys-199 contacts ATP.

This sequence belongs to the adenylate kinase family. Monomer.

The protein localises to the cytoplasm. The catalysed reaction is AMP + ATP = 2 ADP. It participates in purine metabolism; AMP biosynthesis via salvage pathway; AMP from ADP: step 1/1. Functionally, catalyzes the reversible transfer of the terminal phosphate group between ATP and AMP. Plays an important role in cellular energy homeostasis and in adenine nucleotide metabolism. This chain is Adenylate kinase, found in Bacillus pumilus (strain SAFR-032).